Reading from the N-terminus, the 118-residue chain is Small ribosomal subunit protein uS13 (118 aa).

The segment at 94–118 (SLPLRGQRTKTNARTRKGPRKPIRK) is disordered.

The protein belongs to the universal ribosomal protein uS13 family. As to quaternary structure, part of the 30S ribosomal subunit. Forms a loose heterodimer with protein S19. Forms two bridges to the 50S subunit in the 70S ribosome.

In terms of biological role, located at the top of the head of the 30S subunit, it contacts several helices of the 16S rRNA. In the 70S ribosome it contacts the 23S rRNA (bridge B1a) and protein L5 of the 50S subunit (bridge B1b), connecting the 2 subunits; these bridges are implicated in subunit movement. Contacts the tRNAs in the A and P-sites. The protein is Small ribosomal subunit protein uS13 of Shewanella sp. (strain W3-18-1).